The sequence spans 65 residues: Large ribosomal subunit protein bL35 (65 aa).

The tract at residues 1–26 (MPKIKTVRGAAKRFKKTASGGFKRKQ) is disordered. Over residues 10-26 (AAKRFKKTASGGFKRKQ) the composition is skewed to basic residues.

This sequence belongs to the bacterial ribosomal protein bL35 family.

This is Large ribosomal subunit protein bL35 from Actinobacillus succinogenes (strain ATCC 55618 / DSM 22257 / CCUG 43843 / 130Z).